Here is a 425-residue protein sequence, read N- to C-terminus: Serine hydroxymethyltransferase (425 aa).

132–134 (GHL) contributes to the (6S)-5,6,7,8-tetrahydrofolate binding site. An N6-(pyridoxal phosphate)lysine modification is found at Lys-237.

Belongs to the SHMT family. In terms of assembly, homodimer. Pyridoxal 5'-phosphate is required as a cofactor.

The protein localises to the cytoplasm. The enzyme catalyses (6R)-5,10-methylene-5,6,7,8-tetrahydrofolate + glycine + H2O = (6S)-5,6,7,8-tetrahydrofolate + L-serine. The protein operates within one-carbon metabolism; tetrahydrofolate interconversion. It participates in amino-acid biosynthesis; glycine biosynthesis; glycine from L-serine: step 1/1. Catalyzes the reversible interconversion of serine and glycine with tetrahydrofolate (THF) serving as the one-carbon carrier. This reaction serves as the major source of one-carbon groups required for the biosynthesis of purines, thymidylate, methionine, and other important biomolecules. Also exhibits THF-independent aldolase activity toward beta-hydroxyamino acids, producing glycine and aldehydes, via a retro-aldol mechanism. The polypeptide is Serine hydroxymethyltransferase (Wolbachia sp. subsp. Brugia malayi (strain TRS)).